The chain runs to 155 residues: MKLRVLAVGTRMPDWVTRGVDEYLKRLPRDFSVEIVEIAPGKRGKNADVARAIQGEGNAMLAKLRDQERVIALAVDGQHWSTERLAANADHWRQDGRDVALLVGGPDGLDPRLLSRVEQRWSLSALTLPHPLVRILLAEQLYRAWTLLAGHPYHR.

Residues leucine 73, glycine 104, and 123–128 (LSALTL) contribute to the S-adenosyl-L-methionine site.

Belongs to the RNA methyltransferase RlmH family. In terms of assembly, homodimer.

It localises to the cytoplasm. The enzyme catalyses pseudouridine(1915) in 23S rRNA + S-adenosyl-L-methionine = N(3)-methylpseudouridine(1915) in 23S rRNA + S-adenosyl-L-homocysteine + H(+). In terms of biological role, specifically methylates the pseudouridine at position 1915 (m3Psi1915) in 23S rRNA. This is Ribosomal RNA large subunit methyltransferase H from Chromohalobacter salexigens (strain ATCC BAA-138 / DSM 3043 / CIP 106854 / NCIMB 13768 / 1H11).